Here is a 410-residue protein sequence, read N- to C-terminus: 3-phosphoshikimate 1-carboxyvinyltransferase (410 aa).

3-phosphoshikimate-binding residues include Lys21, Ser22, and Arg26. Lys21 is a binding site for phosphoenolpyruvate. Phosphoenolpyruvate-binding residues include Gly69 and Arg97. 3-phosphoshikimate is bound by residues Ser143, Ser144, Gln145, Ser171, Asp288, and Lys315. Gln145 is a binding site for phosphoenolpyruvate. Catalysis depends on Asp288, which acts as the Proton acceptor. Phosphoenolpyruvate contacts are provided by Arg319, Arg364, and Lys389.

This sequence belongs to the EPSP synthase family. As to quaternary structure, monomer.

The protein localises to the cytoplasm. It catalyses the reaction 3-phosphoshikimate + phosphoenolpyruvate = 5-O-(1-carboxyvinyl)-3-phosphoshikimate + phosphate. Its pathway is metabolic intermediate biosynthesis; chorismate biosynthesis; chorismate from D-erythrose 4-phosphate and phosphoenolpyruvate: step 6/7. In terms of biological role, catalyzes the transfer of the enolpyruvyl moiety of phosphoenolpyruvate (PEP) to the 5-hydroxyl of shikimate-3-phosphate (S3P) to produce enolpyruvyl shikimate-3-phosphate and inorganic phosphate. The sequence is that of 3-phosphoshikimate 1-carboxyvinyltransferase from Bacteroides fragilis (strain YCH46).